The sequence spans 586 residues: Arginine--tRNA ligase (586 aa).

A 'HIGH' region motif is present at residues 128-138 (ANPTGPLHVGH).

It belongs to the class-I aminoacyl-tRNA synthetase family. Monomer.

It localises to the cytoplasm. It catalyses the reaction tRNA(Arg) + L-arginine + ATP = L-arginyl-tRNA(Arg) + AMP + diphosphate. The chain is Arginine--tRNA ligase from Coxiella burnetii (strain RSA 331 / Henzerling II).